A 396-amino-acid chain; its full sequence is MSQVLLGTQSFELERFPPQENSNTLQAWEAADEYLLQNIDLNQIDGRPVLVFNDQFGTLTCALHAYRPFSVSDSYMSQLATAHNLRLNHLDEDVVTLLSSMDALPEAPKLVVIKIPKALALLEHQLRALRRVVAPDTVIIAGAKSRDVHNSTLQLFEKILGPTKTTLAWKKARLIHCEVADIPLAEEAPETVDWPLANTEYVIHNHANVFSRNNLDIGARFFMEILPYDVEGKIADLGCGNGVVGLIALEQNPLAEMLFVDESYMAVASSELNITYNRPQDLSRCEFMVSHGLAGVERESLQLVLCNPPFHQQHAVSDHVAWQMFCDAKRCLKVGGELMIVGNRHLDYFHKLKRLFGNCETLDSNQKFMVLKAVKTASSRSEGGGSGSLDMSYSDF.

The protein belongs to the methyltransferase superfamily. RlmG family.

Its subcellular location is the cytoplasm. The enzyme catalyses guanosine(1835) in 23S rRNA + S-adenosyl-L-methionine = N(2)-methylguanosine(1835) in 23S rRNA + S-adenosyl-L-homocysteine + H(+). Its function is as follows. Specifically methylates the guanine in position 1835 (m2G1835) of 23S rRNA. This Yersinia enterocolitica serotype O:8 / biotype 1B (strain NCTC 13174 / 8081) protein is Ribosomal RNA large subunit methyltransferase G.